Consider the following 169-residue polypeptide: Calcium-binding protein G (169 aa).

EF-hand domains lie at 9–44 (KIFQ…KMNG), 60–83 (VDMD…QAKK), 92–127 (AALA…QGYN), and 133–162 (DYVL…KRLA). The Ca(2+) site is built by aspartate 105, aspartate 107, aspartate 109, lysine 111, glutamate 116, aspartate 140, aspartate 142, aspartate 144, tyrosine 146, and glutamate 151.

The sequence is that of Calcium-binding protein G (cbpG) from Dictyostelium discoideum (Social amoeba).